Here is a 115-residue protein sequence, read N- to C-terminus: Na(+)/H(+) antiporter subunit C1 (115 aa).

A run of 3 helical transmembrane segments spans residues 1-21 (MEII…YLVL), 28-48 (IIMG…TMGG), and 72-92 (LILT…VLAF).

It belongs to the CPA3 antiporters (TC 2.A.63) subunit C family. In terms of assembly, may form a heterooligomeric complex that consists of seven subunits: mnhA1, mnhB1, mnhC1, mnhD1, mnhE1, mnhF1 and mnhG1.

It localises to the cell membrane. In terms of biological role, mnh complex is a Na(+)/H(+) antiporter involved in Na(+) excretion. This chain is Na(+)/H(+) antiporter subunit C1 (mnhC1), found in Staphylococcus epidermidis (strain ATCC 35984 / DSM 28319 / BCRC 17069 / CCUG 31568 / BM 3577 / RP62A).